Consider the following 147-residue polypeptide: uncharacterized protein (147 aa).

This is an uncharacterized protein from Caenorhabditis elegans.